A 250-amino-acid polypeptide reads, in one-letter code: Anti-sigma-L factor RslA (250 aa).

Over 1 to 115 (MTMPLRGLGP…VHRRRRRTRL (115 aa)) the chain is Cytoplasmic. The chain crosses the membrane as a helical span at residues 116–136 (ITWVASSAAAAVLAIGVLVGV). Residues 137-250 (QGHSAAPQRA…TGQVLLQRSL (114 aa)) are Extracellular-facing.

In terms of assembly, interacts with ECF RNA polymerase sigma factor SigL; this should inhibit the interaction of SigL with the RNA polymerase catalytic core. Probably cleaved within the membrane by Rip1 near the cytoplasmic membrane interface.

The protein resides in the cell membrane. In terms of biological role, an anti-sigma factor for extracytoplasmic function (ECF) sigma factor SigL. ECF sigma factors are held in an inactive form by an anti-sigma factor until released by regulated intramembrane proteolysis (RIP). RIP occurs when an extracytoplasmic signal triggers a concerted proteolytic cascade to transmit information and elicit cellular responses. The membrane-spanning regulatory substrate protein is first cut extracytoplasmically (site-1 protease, S1P), then within the membrane itself (site-2 protease, S2P, Rip1), while cytoplasmic proteases finish degrading the regulatory protein, liberating the sigma factor. The chain is Anti-sigma-L factor RslA (rslA) from Mycobacterium tuberculosis (strain ATCC 35801 / TMC 107 / Erdman).